A 246-amino-acid chain; its full sequence is Probable transcriptional regulatory protein CLD_1467 (246 aa).

This sequence belongs to the TACO1 family.

It is found in the cytoplasm. The protein is Probable transcriptional regulatory protein CLD_1467 of Clostridium botulinum (strain Okra / Type B1).